Consider the following 431-residue polypeptide: MSTLQITGGQVLTPELTVRTADVLADSETGEILAVGDTAAGDRTLDAEGCLVVPGLVNTHCHAAMTLLRGYADDKPLDRWLQEDIWPVEAELTPEDIRAGTRLGLVELLKNGVTAVGDMYFEVPEVAAAVEEAGIRARLGHGIVTVGKDEADARADFEEGLAVARELDGAADGRVRTALMPHSLTTADPDLIAEFVPRARDAGVPIHYHANETTDEVDPIVDERGVRPLEFADELGLLDEGDFIAHGVHVDETEIELLAERGVGVAHCPASNMKLASGIAPVQEFLDAGVTVGIGTDGPASNNDLDVVDEMRDAAMVGKLGADDAAAVAAPDIVNAATAGGAETLGFDAGRVEAGALADLAIVDLDAPHLTPSHDLVSHLAYAVRGSDVRHTVVGGEVIVEDREVRTLDAGAVKREAERHAAELVSRAEGD.

The Zn(2+) site is built by His60 and His62. Substrate-binding residues include Glu89 and His182. Position 209 (His209) interacts with Zn(2+). Residues Glu212 and Asp297 each contribute to the substrate site. Zn(2+) is bound at residue Asp297.

The protein belongs to the metallo-dependent hydrolases superfamily. MTA/SAH deaminase family. Requires Zn(2+) as cofactor.

The enzyme catalyses S-adenosyl-L-homocysteine + H2O + H(+) = S-inosyl-L-homocysteine + NH4(+). It carries out the reaction S-methyl-5'-thioadenosine + H2O + H(+) = S-methyl-5'-thioinosine + NH4(+). Its function is as follows. Catalyzes the deamination of 5-methylthioadenosine and S-adenosyl-L-homocysteine into 5-methylthioinosine and S-inosyl-L-homocysteine, respectively. Is also able to deaminate adenosine. In Natronomonas pharaonis (strain ATCC 35678 / DSM 2160 / CIP 103997 / JCM 8858 / NBRC 14720 / NCIMB 2260 / Gabara) (Halobacterium pharaonis), this protein is 5-methylthioadenosine/S-adenosylhomocysteine deaminase.